A 254-amino-acid polypeptide reads, in one-letter code: Winged helix repair factor 1 (254 aa).

Residues 4–21 (KRHHLIPETFGVKRRRKR) carry the Bipartite nuclear localization signal motif. Winged helix domain stretches follow at residues 32–104 (EPGS…GIIF), 120–179 (PYAG…LAVP), and 180–254 (GAGR…LPET).

The protein belongs to the STK19 family. Monomer in solution. Homodimer; when bound to DNA. Component of a transcription-coupled nucleotide excision repair (TC-NER) complex composed of STK19, ERCC6, ERCC8, DDA1, DDB1, ELOF1 and UVSSA which assembles and interacts with the multiprotein RNA polymerase II complex when it stalls at DNA lesions. Monocytes, hepatocytes, epithelial cells, T- and B-lymphocytes.

The protein localises to the nucleus. It is found in the cytoplasm. DNA-binding protein which is required for efficient transcription-coupled nucleotide excision repair (TC-NER). Acts as part of a TC-NER complex which assembles and interacts with RNA polymerase II (RNAPII) when it stalls at DNA lesions. TC-NER complex subunit UVSSA binds to the GTF2H1/p62 subunit of the TFIIH transcription factor complex, tethering TFIIH to the TC-NER complex. WHR1/STK19 then interacts with the XPD helicase subunit of TFIIH which guides TFIIH to DNA downstream of the stalled RNAPII, ensuring DNA repair. Directly interacts with RNAPII and also binds to downstream DNA. Promotes the timely removal of DNA damage-stalled RNAPII, allowing downstream NER factors to access DNA lesions. Required for monoubiquitination of UVSSA. Regulates repositioning and stabilization of UVSSA within the TC-NER complex. Stimulates ubiquitination of RNAPII complex member RBP1. Also binds to RNA and regulates the expression levels of many mRNAs. In Homo sapiens (Human), this protein is Winged helix repair factor 1.